The primary structure comprises 371 residues: Putative glutamate--cysteine ligase 2 (371 aa).

It belongs to the glutamate--cysteine ligase type 2 family. YbdK subfamily.

The catalysed reaction is L-cysteine + L-glutamate + ATP = gamma-L-glutamyl-L-cysteine + ADP + phosphate + H(+). In terms of biological role, ATP-dependent carboxylate-amine ligase which exhibits weak glutamate--cysteine ligase activity. This is Putative glutamate--cysteine ligase 2 from Burkholderia cenocepacia (strain HI2424).